We begin with the raw amino-acid sequence, 194 residues long: Orotate phosphoribosyltransferase (194 aa).

5-phospho-alpha-D-ribose 1-diphosphate-binding positions include K98 and 122–130; that span reads EDVLTTGGS. The orotate site is built by T126 and R154.

The protein belongs to the purine/pyrimidine phosphoribosyltransferase family. PyrE subfamily. Homodimer. The cofactor is Mg(2+).

The enzyme catalyses orotidine 5'-phosphate + diphosphate = orotate + 5-phospho-alpha-D-ribose 1-diphosphate. It functions in the pathway pyrimidine metabolism; UMP biosynthesis via de novo pathway; UMP from orotate: step 1/2. Functionally, catalyzes the transfer of a ribosyl phosphate group from 5-phosphoribose 1-diphosphate to orotate, leading to the formation of orotidine monophosphate (OMP). The sequence is that of Orotate phosphoribosyltransferase from Deinococcus radiodurans (strain ATCC 13939 / DSM 20539 / JCM 16871 / CCUG 27074 / LMG 4051 / NBRC 15346 / NCIMB 9279 / VKM B-1422 / R1).